A 477-amino-acid chain; its full sequence is MNSVIHYSTSVAVRKASRFLFTSRKFCNGSIGGDVTDNGTEEPLKITWESSEMDCEFDQEENGEKISVRKRFMESTKLSASRVLDTLQQDCPGFNTKSALDELNVSISGLLVREVLVGILRTLSFDNKTRCAKLAYKFFVWCGGQENFRHTANCYHLLMKIFAECGEYKAMCRLIDEMIKDGYPTTACTFNLLICTCGEAGLARDVVEQFIKSKTFNYRPYKHSYNAILHSLLGVKQYKLIDWVYEQMLEDGFTPDVLTYNIVMFANFRLGKTDRLYRLLDEMVKDGFSPDLYTYNILLHHLATGNKPLAALNLLNHMREVGVEPGVIHFTTLIDGLSRAGKLEACKYFMDETVKVGCTPDVVCYTVMITGYISGGELEKAEEMFKEMTEKGQLPNVFTYNSMIRGFCMAGKFKEACALLKEMESRGCNPNFVVYSTLVNNLKNAGKVLEAHEVVKDMVEKGHYVHLISKLKKYRRS.

PPR repeat units follow at residues 151 to 185 (TANCYHLLMKIFAECGEYKAMCRLIDEMIKDGYPT), 186 to 220 (TACTFNLLICTCGEAGLARDVVEQFIKSKTFNYRP), 221 to 255 (YKHSYNAILHSLLGVKQYKLIDWVYEQMLEDGFTP), 256 to 290 (DVLTYNIVMFANFRLGKTDRLYRLLDEMVKDGFSP), 291 to 325 (DLYTYNILLHHLATGNKPLAALNLLNHMREVGVEP), 326 to 360 (GVIHFTTLIDGLSRAGKLEACKYFMDETVKVGCTP), 361 to 395 (DVVCYTVMITGYISGGELEKAEEMFKEMTEKGQLP), 396 to 430 (NVFTYNSMIRGFCMAGKFKEACALLKEMESRGCNP), and 431 to 465 (NFVVYSTLVNNLKNAGKVLEAHEVVKDMVEKGHYV).

It belongs to the PPR family. P subfamily.

The chain is Pentatricopeptide repeat-containing protein At1g55630 from Arabidopsis thaliana (Mouse-ear cress).